The following is a 604-amino-acid chain: Aspartate--tRNA(Asp/Asn) ligase (604 aa).

An L-aspartate-binding site is contributed by E174. The tract at residues 198–201 (QLYK) is aspartate. R220 is an L-aspartate binding site. ATP-binding positions include 220–222 (RDE) and Q229. Residue H460 coordinates L-aspartate. E494 is an ATP binding site. R501 contacts L-aspartate. 546–549 (GLDR) is an ATP binding site.

It belongs to the class-II aminoacyl-tRNA synthetase family. Type 1 subfamily. As to quaternary structure, homodimer.

The protein localises to the cytoplasm. The enzyme catalyses tRNA(Asx) + L-aspartate + ATP = L-aspartyl-tRNA(Asx) + AMP + diphosphate. In terms of biological role, aspartyl-tRNA synthetase with relaxed tRNA specificity since it is able to aspartylate not only its cognate tRNA(Asp) but also tRNA(Asn). Reaction proceeds in two steps: L-aspartate is first activated by ATP to form Asp-AMP and then transferred to the acceptor end of tRNA(Asp/Asn). This is Aspartate--tRNA(Asp/Asn) ligase from Paracidovorax citrulli (strain AAC00-1) (Acidovorax citrulli).